Consider the following 514-residue polypeptide: 2,3-bisphosphoglycerate-independent phosphoglycerate mutase (514 aa).

Aspartate 14 and serine 64 together coordinate Mn(2+). Serine 64 functions as the Phosphoserine intermediate in the catalytic mechanism. Residues histidine 125, 155–156, arginine 187, arginine 193, 263–266, and lysine 336 contribute to the substrate site; these read RD and RADR. The Mn(2+) site is built by aspartate 403, histidine 407, aspartate 444, histidine 445, and histidine 463.

This sequence belongs to the BPG-independent phosphoglycerate mutase family. In terms of assembly, monomer. Requires Mn(2+) as cofactor.

It catalyses the reaction (2R)-2-phosphoglycerate = (2R)-3-phosphoglycerate. The protein operates within carbohydrate degradation; glycolysis; pyruvate from D-glyceraldehyde 3-phosphate: step 3/5. Functionally, catalyzes the interconversion of 2-phosphoglycerate and 3-phosphoglycerate. The protein is 2,3-bisphosphoglycerate-independent phosphoglycerate mutase of Salmonella paratyphi A (strain ATCC 9150 / SARB42).